Here is a 250-residue protein sequence, read N- to C-terminus: Ubiquinone/menaquinone biosynthesis C-methyltransferase UbiE (250 aa).

Residues T73, D94, and 122–123 (DA) contribute to the S-adenosyl-L-methionine site.

The protein belongs to the class I-like SAM-binding methyltransferase superfamily. MenG/UbiE family.

It catalyses the reaction a 2-demethylmenaquinol + S-adenosyl-L-methionine = a menaquinol + S-adenosyl-L-homocysteine + H(+). The catalysed reaction is a 2-methoxy-6-(all-trans-polyprenyl)benzene-1,4-diol + S-adenosyl-L-methionine = a 5-methoxy-2-methyl-3-(all-trans-polyprenyl)benzene-1,4-diol + S-adenosyl-L-homocysteine + H(+). It participates in quinol/quinone metabolism; menaquinone biosynthesis; menaquinol from 1,4-dihydroxy-2-naphthoate: step 2/2. It functions in the pathway cofactor biosynthesis; ubiquinone biosynthesis. Methyltransferase required for the conversion of demethylmenaquinol (DMKH2) to menaquinol (MKH2) and the conversion of 2-polyprenyl-6-methoxy-1,4-benzoquinol (DDMQH2) to 2-polyprenyl-3-methyl-6-methoxy-1,4-benzoquinol (DMQH2). In Coxiella burnetii (strain RSA 331 / Henzerling II), this protein is Ubiquinone/menaquinone biosynthesis C-methyltransferase UbiE.